The chain runs to 196 residues: Nucleoside triphosphate pyrophosphatase (196 aa).

D73 functions as the Proton acceptor in the catalytic mechanism.

The protein belongs to the Maf family. The cofactor is a divalent metal cation.

The protein resides in the cytoplasm. It carries out the reaction a ribonucleoside 5'-triphosphate + H2O = a ribonucleoside 5'-phosphate + diphosphate + H(+). It catalyses the reaction a 2'-deoxyribonucleoside 5'-triphosphate + H2O = a 2'-deoxyribonucleoside 5'-phosphate + diphosphate + H(+). Functionally, nucleoside triphosphate pyrophosphatase. May have a dual role in cell division arrest and in preventing the incorporation of modified nucleotides into cellular nucleic acids. The sequence is that of Nucleoside triphosphate pyrophosphatase from Anaplasma marginale (strain Florida).